A 375-amino-acid chain; its full sequence is MAPLTAAMRSTPRIIVSNAFGFQRRAISDVTITRTGKPIIRNQGGRSSLGGHTATVFGATGQLGRYIVNRLARQGCTVVIPFRDEYNKRHLKVTGDLGKVVMIEFDLRNTQSIEESVRHSDVVYNLIGRDYPTKNFSFEDVHIEGAERIAEAVAKYDVDRFIHVSSYNADPNSECEFFATKARGEQVVRSIFPETTIVRPAPMFGFEDRLLHKLASVKNILTSNGMQEKYNPVHVIDVGQALEQMLWDDNTASETFELYGPKTYTTAEISEMVDREIYKRRRHVNVPKKILKPIAGVLNKALWWPIMSADEIEREFHDQVIDPEAKTFKDLGIEPADIANFTYHYLQSYRSNAYYDLPPATEKERREDREYIHML.

The N-terminal 26 residues, 1–26 (MAPLTAAMRSTPRIIVSNAFGFQRRA), are a transit peptide targeting the mitochondrion.

It belongs to the complex I NDUFA9 subunit family. In terms of assembly, complex I is composed of about 40 different subunits. Requires FAD as cofactor.

It localises to the mitochondrion matrix. Its function is as follows. Accessory subunit of the mitochondrial membrane respiratory chain NADH dehydrogenase (Complex I), that is believed not to be involved in catalysis. Complex I functions in the transfer of electrons from NADH to the respiratory chain. The immediate electron acceptor for the enzyme is believed to be ubiquinone. The sequence is that of NADH-ubiquinone oxidoreductase 40 kDa subunit, mitochondrial (nuo40) from Neurospora crassa (strain ATCC 24698 / 74-OR23-1A / CBS 708.71 / DSM 1257 / FGSC 987).